The chain runs to 356 residues: Cyclin-D1-binding protein 1 (356 aa).

Residue alanine 2 is modified to N-acetylalanine. Interaction with TCF3 regions lie at residues 2–181 (ASST…VDFV) and 147–356 (ISCN…AAEL). Positions 2–187 (ASSTAAVPFL…VDFVKDAHEE (186 aa)) are interaction with RPLP0. Residues 2-205 (ASSTAAVPFL…DPYSGLLNDS (204 aa)) are required for interaction with CCND1. The tract at residues 198–224 (YSGLLNDSEDNSDSHSDEDGVLGLPSN) is disordered. Residues 236 to 356 (LIIPCLALVR…KALTQRAAEL (121 aa)) form an interaction with RPLP0 region.

It belongs to the CCNDBP1 family. In terms of assembly, interacts with CCND1 and GRAP2. May also interact with COPS5, RPLP0, SIRT6, SYF2 and TCF3. In terms of processing, phosphorylated. As to expression, expressed at high levels in brain, intestine, muscle and ovary and at lower levels in heart, kidney, liver, lung, spleen and testis.

Its subcellular location is the cytoplasm. It localises to the nucleus. May negatively regulate cell cycle progression. May act at least in part via inhibition of the cyclin-D1/CDK4 complex, thereby preventing phosphorylation of RB1 and blocking E2F-dependent transcription. May be required for hepatocyte proliferation. This Mus musculus (Mouse) protein is Cyclin-D1-binding protein 1 (Ccndbp1).